The sequence spans 600 residues: MSDVREFIRAASGGESKATVAVCGGRLVNVVSEEIYQADVAIYRDRIIAVGDISEYIGPQTEIIDAADRYLTPGMIDGHLHVECSKLSLTSFAKAVLPLGTTSIVSGLDQIIVVGGPDAAREFLDEVRQTPLKVFWGAPCKTPYTMPRSTVGHYFSPKDHRDTHHWPECVGIWETVREFIQEEDEDVLQAIEIGQANRLPVLGCCPMTRGARLNGYMQSGVRADHESYTPEEMLEKLRAGMHVVVRESSISHFLSDNLRIVTEMGVKALRRISFCTDDVVASDILSRGHLDNMVRMAMAMGISPMAAIQMATINGAEALRIDHKVGSISPGRTADILIVNDLRDFRIEAVVANGTVAARDGRMVVKLVPPQRSAGLLRSVKTTPVTAADIAVPFTGTTPFAEVLAIAVTPEKVFVRTRRDVRLPVVDGKILADASQNVQYVTVVERYGKTLNRPVAFVSGFNLKSGAIASSTAPDDNNIICIGADPQDMAIAINHLVANNGGQVVVDKGEVVEFLHLPIGGIVSDIDPAEMAAFELRLDEAARRLGCDLPWPFMYMFVLQITAIPDYAMTDLGVVDCVNLRIISPLAPDGPAKANTLAAE.

Belongs to the metallo-dependent hydrolases superfamily. Adenine deaminase family. The cofactor is Mn(2+).

It catalyses the reaction adenine + H2O + H(+) = hypoxanthine + NH4(+). This is Adenine deaminase 4 from Rhizobium meliloti (strain 1021) (Ensifer meliloti).